Consider the following 360-residue polypeptide: UDP-N-acetylglucosamine--N-acetylmuramyl-(pentapeptide) pyrophosphoryl-undecaprenol N-acetylglucosamine transferase (360 aa).

Residues 12–14, Asn124, Arg161, Ser189, Ile243, and Gln288 contribute to the UDP-N-acetyl-alpha-D-glucosamine site; that span reads TGG.

It belongs to the glycosyltransferase 28 family. MurG subfamily.

It is found in the cell inner membrane. It catalyses the reaction di-trans,octa-cis-undecaprenyl diphospho-N-acetyl-alpha-D-muramoyl-L-alanyl-D-glutamyl-meso-2,6-diaminopimeloyl-D-alanyl-D-alanine + UDP-N-acetyl-alpha-D-glucosamine = di-trans,octa-cis-undecaprenyl diphospho-[N-acetyl-alpha-D-glucosaminyl-(1-&gt;4)]-N-acetyl-alpha-D-muramoyl-L-alanyl-D-glutamyl-meso-2,6-diaminopimeloyl-D-alanyl-D-alanine + UDP + H(+). It functions in the pathway cell wall biogenesis; peptidoglycan biosynthesis. Cell wall formation. Catalyzes the transfer of a GlcNAc subunit on undecaprenyl-pyrophosphoryl-MurNAc-pentapeptide (lipid intermediate I) to form undecaprenyl-pyrophosphoryl-MurNAc-(pentapeptide)GlcNAc (lipid intermediate II). In Acidithiobacillus ferrooxidans (strain ATCC 23270 / DSM 14882 / CIP 104768 / NCIMB 8455) (Ferrobacillus ferrooxidans (strain ATCC 23270)), this protein is UDP-N-acetylglucosamine--N-acetylmuramyl-(pentapeptide) pyrophosphoryl-undecaprenol N-acetylglucosamine transferase.